A 44-amino-acid chain; its full sequence is Photosystem I reaction center subunit IX (44 aa).

A helical membrane pass occupies residues 7–27; that stretch reads YLSVAPVLSTLWFGALAGLLI.

The protein belongs to the PsaJ family.

Its subcellular location is the plastid. The protein resides in the chloroplast thylakoid membrane. In terms of biological role, may help in the organization of the PsaE and PsaF subunits. The sequence is that of Photosystem I reaction center subunit IX from Eucalyptus globulus subsp. globulus (Tasmanian blue gum).